Here is a 99-residue protein sequence, read N- to C-terminus: Protein Frey (99 aa).

A helical membrane pass occupies residues 7 to 29 (GALYPRAGLSLFLLYLVLAAVLL). Positions 65–88 (PKHPWPRGPRPLLSRAQQRKRDGP) are disordered.

In terms of assembly, interacts with SPPL2C (via active sites); the interaction stabilizes FREY1 protein and inhibits SPPL2C proteolytic activity. Interacts with IZUMO1; the interaction retains IZUMO1 at the endoplasmic reticulum membrane and coordinates IZUMO1 complex assembly.

Its subcellular location is the endoplasmic reticulum membrane. Functionally, key regulator for male fertility expressed transiently in round spermatids where it recruits IZUMO1 at the endoplasmic reticulum (ER) membrane and coordinates the oolemmal binding multimeric complex (IZUMO1 complex) assembly. Upon complete assembly of the IZUMO1 complex, its ER retention is released, facilitating IZUMO1 complex export to the acrosome. Through the interaction with SPPL2C, inhibits its intramembrane protease activity directly accessing the catalytic center of an I-CLiP. This chain is Protein Frey, found in Ailuropoda melanoleuca (Giant panda).